We begin with the raw amino-acid sequence, 310 residues long: Acetaldehyde dehydrogenase 1 (310 aa).

12–15 lines the NAD(+) pocket; sequence SGNI. C127 (acyl-thioester intermediate) is an active-site residue. NAD(+)-binding positions include 163–171 and N282; that span reads SAGPGTRAN.

It belongs to the acetaldehyde dehydrogenase family.

The enzyme catalyses acetaldehyde + NAD(+) + CoA = acetyl-CoA + NADH + H(+). This chain is Acetaldehyde dehydrogenase 1, found in Mycobacterium sp. (strain KMS).